The sequence spans 138 residues: Small ribosomal subunit protein uS11c (138 aa).

Belongs to the universal ribosomal protein uS11 family. Part of the 30S ribosomal subunit.

It localises to the plastid. It is found in the chloroplast. The sequence is that of Small ribosomal subunit protein uS11c from Morus indica (Mulberry).